The sequence spans 544 residues: Chaperonin GroEL 2 (544 aa).

Residues 29–32 (TLGP), Lys-50, 86–90 (DGTTT), Gly-414, and Asp-494 contribute to the ATP site.

The protein belongs to the chaperonin (HSP60) family. As to quaternary structure, forms a cylinder of 14 subunits composed of two heptameric rings stacked back-to-back. Interacts with the co-chaperonin GroES.

The protein localises to the cytoplasm. The enzyme catalyses ATP + H2O + a folded polypeptide = ADP + phosphate + an unfolded polypeptide.. Functionally, together with its co-chaperonin GroES, plays an essential role in assisting protein folding. The GroEL-GroES system forms a nano-cage that allows encapsulation of the non-native substrate proteins and provides a physical environment optimized to promote and accelerate protein folding. This is Chaperonin GroEL 2 from Psychromonas ingrahamii (strain DSM 17664 / CCUG 51855 / 37).